Consider the following 906-residue polypeptide: uncharacterized protein (906 aa).

2 disordered regions span residues 231–322 (KEDA…PSTI) and 865–906 (AGAY…DEDE). Residues 236–250 (TTKQTTTTTTTTPQT) are compositionally biased toward low complexity. Residues 264–281 (TPTPAPAPKPTTPKPTPA) are compositionally biased toward pro residues. Positions 302–314 (SVNNIPTPSDTNE) are enriched in polar residues. A compositionally biased stretch (acidic residues) spans 867-906 (AYEDDDDDEGEGNEDDEDNDENEDEDEGEGEGDSSEDEDE).

This is an uncharacterized protein from Dictyostelium sp. (strain GA11) (Slime mold).